A 205-amino-acid chain; its full sequence is Pyridoxal 5'-phosphate synthase subunit PdxT (205 aa).

Residue Gly-53–Ser-55 coordinates L-glutamine. The Nucleophile role is filled by Cys-85. L-glutamine-binding positions include Arg-112 and Ile-140–Arg-141. Catalysis depends on charge relay system residues His-176 and Glu-178.

It belongs to the glutaminase PdxT/SNO family. In terms of assembly, in the presence of PdxS, forms a dodecamer of heterodimers. Only shows activity in the heterodimer.

The enzyme catalyses aldehydo-D-ribose 5-phosphate + D-glyceraldehyde 3-phosphate + L-glutamine = pyridoxal 5'-phosphate + L-glutamate + phosphate + 3 H2O + H(+). The catalysed reaction is L-glutamine + H2O = L-glutamate + NH4(+). The protein operates within cofactor biosynthesis; pyridoxal 5'-phosphate biosynthesis. Its function is as follows. Catalyzes the hydrolysis of glutamine to glutamate and ammonia as part of the biosynthesis of pyridoxal 5'-phosphate. The resulting ammonia molecule is channeled to the active site of PdxS. The sequence is that of Pyridoxal 5'-phosphate synthase subunit PdxT from Haloquadratum walsbyi (strain DSM 16790 / HBSQ001).